The sequence spans 81 residues: Insect-toxin Cn10 (81 aa).

Residues 1–13 form the signal peptide; sequence ITACLVLIGTVCA. The LCN-type CS-alpha/beta domain occupies 14–79; the sequence is KEGYLVNKST…TYPIPGKTCR (66 aa). Disulfide bonds link Cys25/Cys78, Cys29/Cys54, Cys38/Cys59, and Cys42/Cys61. Residue Lys81 is a propeptide, removed by a carboxypeptidase.

Belongs to the long (4 C-C) scorpion toxin superfamily. Sodium channel inhibitor family. Beta subfamily. In terms of tissue distribution, expressed by the venom gland.

Its subcellular location is the secreted. Functionally, beta toxins bind voltage-independently at site-4 of sodium channels (Nav) and shift the voltage of activation toward more negative potentials thereby affecting sodium channel activation and promoting spontaneous and repetitive firing. Is toxic on insects and crustaceans, but not on mammals. The protein is Insect-toxin Cn10 of Centruroides noxius (Mexican scorpion).